Here is a 451-residue protein sequence, read N- to C-terminus: Probable gamma-glutamyl phosphate reductase (451 aa).

This sequence belongs to the gamma-glutamyl phosphate reductase family.

It carries out the reaction L-glutamate 5-semialdehyde + phosphate + NADP(+) = L-glutamyl 5-phosphate + NADPH + H(+). Its pathway is amino-acid biosynthesis; L-proline biosynthesis; L-glutamate 5-semialdehyde from L-glutamate: step 2/2. Its function is as follows. Catalyzes the NADPH dependent reduction of L-gamma-glutamyl 5-phosphate into L-glutamate 5-semialdehyde and phosphate. The product spontaneously undergoes cyclization to form 1-pyrroline-5-carboxylate. This chain is Probable gamma-glutamyl phosphate reductase (pro1), found in Schizosaccharomyces pombe (strain 972 / ATCC 24843) (Fission yeast).